Consider the following 182-residue polypeptide: Ribosome-recycling factor (182 aa).

This sequence belongs to the RRF family.

It localises to the cytoplasm. Functionally, responsible for the release of ribosomes from messenger RNA at the termination of protein biosynthesis. May increase the efficiency of translation by recycling ribosomes from one round of translation to another. The protein is Ribosome-recycling factor of Synechococcus sp. (strain JA-2-3B'a(2-13)) (Cyanobacteria bacterium Yellowstone B-Prime).